The chain runs to 22 residues: Chlorophyllase type 1 (22 aa).

The protein belongs to the AB hydrolase superfamily. Lipase family.

The catalysed reaction is a chlorophyll + H2O = a chlorophyllide + phytol + H(+). It participates in porphyrin-containing compound metabolism; chlorophyll degradation. Functionally, catalyzes the hydrolysis of ester bond in chlorophyll to yield chlorophyllide and phytol. The protein is Chlorophyllase type 1 of Chenopodium album (Fat hen).